The chain runs to 572 residues: Proline--tRNA ligase (572 aa).

This sequence belongs to the class-II aminoacyl-tRNA synthetase family. ProS type 1 subfamily. In terms of assembly, homodimer.

The protein localises to the cytoplasm. It catalyses the reaction tRNA(Pro) + L-proline + ATP = L-prolyl-tRNA(Pro) + AMP + diphosphate. In terms of biological role, catalyzes the attachment of proline to tRNA(Pro) in a two-step reaction: proline is first activated by ATP to form Pro-AMP and then transferred to the acceptor end of tRNA(Pro). As ProRS can inadvertently accommodate and process non-cognate amino acids such as alanine and cysteine, to avoid such errors it has two additional distinct editing activities against alanine. One activity is designated as 'pretransfer' editing and involves the tRNA(Pro)-independent hydrolysis of activated Ala-AMP. The other activity is designated 'posttransfer' editing and involves deacylation of mischarged Ala-tRNA(Pro). The misacylated Cys-tRNA(Pro) is not edited by ProRS. The chain is Proline--tRNA ligase from Dichelobacter nodosus (strain VCS1703A).